The following is a 59-amino-acid chain: UPF0434 protein Pnec_0311 (59 aa).

This sequence belongs to the UPF0434 family.

In Polynucleobacter necessarius subsp. necessarius (strain STIR1), this protein is UPF0434 protein Pnec_0311.